The following is a 161-amino-acid chain: MPSFDVVCEANMVELKNAVEQANKEISTRFDFKGSDARVEHKDQELTLFGDDDFKLGQVKDVLLTKLAKRGVDVRFLDYQDKQKIGGDKMKQVVKIKKGVSGELSKKIVKLIKDSKIKVQGSIQGDAVRVSGAKRDDLQAVIAMLRKDVTDTPLDFNNFRD.

This sequence belongs to the YajQ family.

Its function is as follows. Nucleotide-binding protein. In Ralstonia nicotianae (strain ATCC BAA-1114 / GMI1000) (Ralstonia solanacearum), this protein is Nucleotide-binding protein RSc2549.